A 57-amino-acid chain; its full sequence is Granulin-3 (57 aa).

Intrachain disulfides connect Cys-4–Cys-16 and Cys-10–Cys-26.

This sequence belongs to the granulin family. Post-translationally, granulins are disulfide bridged. Ubiquitous.

The protein localises to the secreted. Its function is as follows. Granulins have possible cytokine-like activity. They may play a role in inflammation, wound repair, and tissue remodeling. The polypeptide is Granulin-3 (Cyprinus carpio (Common carp)).